The primary structure comprises 1388 residues: Rho-associated protein kinase 2 (1388 aa).

Positions 1 to 24 are disordered; the sequence is MSRPPPTGKMPGAPEAAAGDGAGA. The 263-residue stretch at 92–354 folds into the Protein kinase domain; the sequence is YDVVKVIGRG…VEEIKSASFF (263 aa). ATP contacts are provided by residues 98–106 and Lys-121; that span reads IGRGAFGEV. Asp-214 functions as the Proton acceptor in the catalytic mechanism. Residues 357–425 form the AGC-kinase C-terminal domain; the sequence is DQWNWDNIRE…FRENLLLSDS (69 aa). An interaction with PPP1R12A region spans residues 363-784; sequence NIRETAAPVV…LNELLKQKDV (422 aa). The interval 373 to 420 is interaction with NPM1; it reads PELSSDIDSSNFDDIEDDKGDVETFPIPKAFVGNQLPFIGFTYFRENL. Position 414 is a phosphothreonine; by ROCK2 (Thr-414). Coiled coils occupy residues 439–1024 and 1052–1131; these read SEES…EKQL and SDTD…IGMD. One can recognise an REM-1 domain in the interval 497-573; the sequence is TLRQLEREKA…LDEANALLRT (77 aa). The span at 513–530 shows a compositional bias: basic and acidic residues; it reads AEYQRKADHEADKKRNLE. Residues 513 to 532 form a disordered region; it reads AEYQRKADHEADKKRNLEND. Tyr-722 carries the post-translational modification Phosphotyrosine; by SRC. Positions 979-1047 constitute a RhoBD domain; sequence TSDVANLANE…LAEIMNRKEP (69 aa). Positions 979–1047 are RHOA binding; that stretch reads TSDVANLANE…LAEIMNRKEP (69 aa). Ser-1137 bears the Phosphoserine mark. One can recognise a PH domain in the interval 1150–1349; the sequence is ESRLEGWLSL…WVSRLVKKIP (200 aa). Residue Thr-1212 is modified to Phosphothreonine. The Phorbol-ester/DAG-type zinc finger occupies 1260–1315; that stretch reads GHEFIPTLYHFPTNCEACMKPLWHMFKPPPALECSRCHIKCHKDHMDKKEEIIAPC. A disordered region spans residues 1345–1388; sequence VKKIPKKPPAPDPFARSSPRTSMKIQQNQSIRRPSRQLAPNKPS. 2 positions are modified to phosphoserine: Ser-1362 and Ser-1374. The span at 1362 to 1376 shows a compositional bias: polar residues; the sequence is SPRTSMKIQQNQSIR.

Belongs to the protein kinase superfamily. AGC Ser/Thr protein kinase family. Homodimer. Interacts with IRS1. Interacts with RAF1. Interacts with RHOA (activated by GTP), RHOB, RHOC. Interacts with PPP1R12A. Interacts with EP300. Interacts with CHORDC1. Interacts with BRCA2. Interacts with NPM1; this interaction enhances its activity. Interacts with SORL1. Interacts with PJVK. Mg(2+) serves as cofactor. Autophosphorylated. Phosphorylation at Tyr-722 reduces its binding to RHOA and is crucial for focal adhesion dynamics. Dephosphorylation by PTPN11 stimulates its RHOA binding activity. In terms of processing, cleaved by granzyme B during apoptosis. This leads to constitutive activation of the kinase and membrane blebbing. As to expression, highly expressed in brain, lung, liver, skeletal muscle, kidney and testis.

The protein localises to the cytoplasm. It is found in the cell membrane. It localises to the nucleus. The protein resides in the cytoskeleton. Its subcellular location is the microtubule organizing center. The protein localises to the centrosome. It carries out the reaction L-seryl-[protein] + ATP = O-phospho-L-seryl-[protein] + ADP + H(+). It catalyses the reaction L-threonyl-[protein] + ATP = O-phospho-L-threonyl-[protein] + ADP + H(+). With respect to regulation, activated by RHOA binding. Inhibited by Y-27632. Protein kinase which is a key regulator of actin cytoskeleton and cell polarity. Involved in regulation of smooth muscle contraction, actin cytoskeleton organization, stress fiber and focal adhesion formation, neurite retraction, cell adhesion and motility via phosphorylation of ADD1, BRCA2, CNN1, EZR, DPYSL2, EP300, MSN, MYL9/MLC2, NPM1, RDX, PPP1R12A and VIM. Phosphorylates SORL1 and IRF4. Acts as a negative regulator of VEGF-induced angiogenic endothelial cell activation. Positively regulates the activation of p42/MAPK1-p44/MAPK3 and of p90RSK/RPS6KA1 during myogenic differentiation. Plays an important role in the timely initiation of centrosome duplication. Inhibits keratinocyte terminal differentiation. May regulate closure of the eyelids and ventral body wall through organization of actomyosin bundles. Plays a critical role in the regulation of spine and synaptic properties in the hippocampus. Plays a role in placental homeostasis during the perinatal period. Plays an important role in generating the circadian rhythm of the aortic myofilament Ca(2+) sensitivity and vascular contractility by modulating the myosin light chain phosphorylation. This chain is Rho-associated protein kinase 2 (Rock2), found in Rattus norvegicus (Rat).